Reading from the N-terminus, the 368-residue chain is Transcription factor bHLH30 (368 aa).

Residues 3-30 (AKKEEEEEEEEDSSEAMNNIQNYQNDLF) adopt a coiled-coil conformation. The 50-residue stretch at 173–222 (AASKSHSEAERRRRERINNHLAKLRSILPNTTKTDKASLLAEVIQHVKEL) folds into the bHLH domain. The disordered stretch occupies residues 333–368 (KSNVEESSSSGNAKRQRMSSHNTITIVEQQQQYNQR). The segment covering 337–368 (EESSSSGNAKRQRMSSHNTITIVEQQQQYNQR) has biased composition (polar residues).

As to quaternary structure, homodimer. Interacts with LHW.

It localises to the nucleus. In Arabidopsis thaliana (Mouse-ear cress), this protein is Transcription factor bHLH30 (BHLH30).